The sequence spans 443 residues: Xaa-Pro dipeptidase (443 aa).

Residues aspartate 246, aspartate 257, histidine 339, glutamate 384, and glutamate 423 each contribute to the Mn(2+) site.

It belongs to the peptidase M24B family. Bacterial-type prolidase subfamily. Requires Mn(2+) as cofactor.

The enzyme catalyses Xaa-L-Pro dipeptide + H2O = an L-alpha-amino acid + L-proline. Functionally, splits dipeptides with a prolyl residue in the C-terminal position. The protein is Xaa-Pro dipeptidase of Erwinia tasmaniensis (strain DSM 17950 / CFBP 7177 / CIP 109463 / NCPPB 4357 / Et1/99).